Consider the following 453-residue polypeptide: Phosphoglucosamine mutase (453 aa).

The Phosphoserine intermediate role is filled by Ser105. The Mg(2+) site is built by Ser105, Asp244, Asp246, and Asp248. Position 105 is a phosphoserine (Ser105).

The protein belongs to the phosphohexose mutase family. Mg(2+) is required as a cofactor. Post-translationally, activated by phosphorylation.

The catalysed reaction is alpha-D-glucosamine 1-phosphate = D-glucosamine 6-phosphate. Catalyzes the conversion of glucosamine-6-phosphate to glucosamine-1-phosphate. The protein is Phosphoglucosamine mutase of Chromohalobacter salexigens (strain ATCC BAA-138 / DSM 3043 / CIP 106854 / NCIMB 13768 / 1H11).